A 311-amino-acid chain; its full sequence is Mitoferrin (311 aa).

Solcar repeat units lie at residues 15-102, 111-195, and 202-302; these read HSIP…MKSF, EHTL…WQQV, and YDPK…FKFM. Transmembrane regions (helical) follow at residues 17 to 36, 77 to 96, 112 to 132, 170 to 189, 204 to 223, and 277 to 296; these read IPVH…CVMF, GVNA…FTVY, HTLA…AVMN, SYTT…FMGY, PKSH…AVTT, and GLQA…WSVY.

The protein belongs to the mitochondrial carrier (TC 2.A.29) family.

The protein localises to the mitochondrion inner membrane. Mitochondrial iron transporter that mediates iron uptake. Probably required for heme synthesis of hemoproteins and Fe-S cluster assembly. The chain is Mitoferrin from Caenorhabditis briggsae.